A 243-amino-acid polypeptide reads, in one-letter code: Pyridoxine 5'-phosphate synthase (243 aa).

Residue N9 coordinates 3-amino-2-oxopropyl phosphate. 1-deoxy-D-xylulose 5-phosphate is bound at residue 11-12 (DH). 3-amino-2-oxopropyl phosphate is bound at residue R20. H45 functions as the Proton acceptor in the catalytic mechanism. Residues R47 and H52 each contribute to the 1-deoxy-D-xylulose 5-phosphate site. Residue E72 is the Proton acceptor of the active site. 1-deoxy-D-xylulose 5-phosphate is bound at residue T102. H193 acts as the Proton donor in catalysis. 3-amino-2-oxopropyl phosphate is bound by residues G194 and 215-216 (GH).

Belongs to the PNP synthase family. Homooctamer; tetramer of dimers.

The protein resides in the cytoplasm. It carries out the reaction 3-amino-2-oxopropyl phosphate + 1-deoxy-D-xylulose 5-phosphate = pyridoxine 5'-phosphate + phosphate + 2 H2O + H(+). The protein operates within cofactor biosynthesis; pyridoxine 5'-phosphate biosynthesis; pyridoxine 5'-phosphate from D-erythrose 4-phosphate: step 5/5. Catalyzes the complicated ring closure reaction between the two acyclic compounds 1-deoxy-D-xylulose-5-phosphate (DXP) and 3-amino-2-oxopropyl phosphate (1-amino-acetone-3-phosphate or AAP) to form pyridoxine 5'-phosphate (PNP) and inorganic phosphate. This is Pyridoxine 5'-phosphate synthase from Yersinia pseudotuberculosis serotype I (strain IP32953).